A 73-amino-acid polypeptide reads, in one-letter code: Large ribosomal subunit protein bL31 (73 aa).

Basic and acidic residues predominate over residues 34–43 (KMNLDIDPKS). Residues 34–54 (KMNLDIDPKSHPAWTGGTQQM) form a disordered region.

The protein belongs to the bacterial ribosomal protein bL31 family. Type A subfamily. In terms of assembly, part of the 50S ribosomal subunit.

Binds the 23S rRNA. In Rhodopseudomonas palustris (strain BisA53), this protein is Large ribosomal subunit protein bL31.